An 86-amino-acid polypeptide reads, in one-letter code: Sulmotoxin 2 (86 aa).

The first 21 residues, 1 to 21, serve as a signal peptide directing secretion; that stretch reads MKTLLLALAVVAFMCLDSVYP. Disulfide bonds link cysteine 24-cysteine 47, cysteine 27-cysteine 35, cysteine 41-cysteine 62, cysteine 66-cysteine 77, and cysteine 78-cysteine 83.

It belongs to the three-finger toxin family. Ancestral subfamily. Boigatoxin sub-subfamily. In terms of assembly, monomer. In terms of tissue distribution, expressed by the venom gland.

The protein localises to the secreted. Its function is as follows. Probable neurotoxin. Is not toxic to mice and geckos. In Spilotes sulphureus (Amazon puffing snake), this protein is Sulmotoxin 2.